Reading from the N-terminus, the 151-residue chain is Transmembrane protein 239 (151 aa).

3 helical membrane-spanning segments follow: residues 61–81, 85–105, and 116–138; these read LWGL…HALF, SYLL…LLPA, and ALLF…GLLT.

The protein localises to the membrane. In Mus musculus (Mouse), this protein is Transmembrane protein 239 (Tmem239).